Consider the following 182-residue polypeptide: CDP-diacylglycerol--glycerol-3-phosphate 3-phosphatidyltransferase (182 aa).

Topologically, residues 2–12 are cytoplasmic; the sequence is QFNIPTLLTLF. The helical transmembrane segment at 13-37 threads the bilayer; that stretch reads RVILIPFFVVVFYLPFAWAPMVSAL. The Periplasmic portion of the chain corresponds to 38 to 60; it reads IFCIAAITDWFDGFLARRWNQST. A helical transmembrane segment spans residues 61 to 81; sequence RFGAFLDPVADKVLVAIAMVL. Topologically, residues 82 to 86 are cytoplasmic; it reads VTEHY. A helical membrane pass occupies residues 87–107; that stretch reads HSWWVTLPAATMIAREIIISA. Residues 108 to 145 are Periplasmic-facing; it reads LREWMAELGKRSSVAVSWIGKVKTTAQMVALAWLLWRP. Residues 146 to 168 form a helical membrane-spanning segment; that stretch reads NIWVEYAGIALFFVAAVLTLWSM. Residues 169-181 are Cytoplasmic-facing; sequence LQYLSAARGDLLD.

The protein belongs to the CDP-alcohol phosphatidyltransferase class-I family.

The protein localises to the cell inner membrane. The enzyme catalyses a CDP-1,2-diacyl-sn-glycerol + sn-glycerol 3-phosphate = a 1,2-diacyl-sn-glycero-3-phospho-(1'-sn-glycero-3'-phosphate) + CMP + H(+). It participates in phospholipid metabolism; phosphatidylglycerol biosynthesis; phosphatidylglycerol from CDP-diacylglycerol: step 1/2. Functionally, catalyzes the conversion of cytidine diphosphate diacylglycerol (CDP-DG) and glycerol 3-phosphate into phosphatidylglycerol. Essential for the synthesis of anionic phospholipids, thereby playing a role in balancing the ratio of zwitterionic and anionic phospholipids, which is thought to be important for normal membrane function. This Salmonella paratyphi A (strain ATCC 9150 / SARB42) protein is CDP-diacylglycerol--glycerol-3-phosphate 3-phosphatidyltransferase.